A 93-amino-acid chain; its full sequence is Pyrimidine/purine nucleoside phosphorylase (93 aa).

Belongs to the nucleoside phosphorylase PpnP family.

The catalysed reaction is a purine D-ribonucleoside + phosphate = a purine nucleobase + alpha-D-ribose 1-phosphate. It catalyses the reaction adenosine + phosphate = alpha-D-ribose 1-phosphate + adenine. It carries out the reaction cytidine + phosphate = cytosine + alpha-D-ribose 1-phosphate. The enzyme catalyses guanosine + phosphate = alpha-D-ribose 1-phosphate + guanine. The catalysed reaction is inosine + phosphate = alpha-D-ribose 1-phosphate + hypoxanthine. It catalyses the reaction thymidine + phosphate = 2-deoxy-alpha-D-ribose 1-phosphate + thymine. It carries out the reaction uridine + phosphate = alpha-D-ribose 1-phosphate + uracil. The enzyme catalyses xanthosine + phosphate = alpha-D-ribose 1-phosphate + xanthine. In terms of biological role, catalyzes the phosphorolysis of diverse nucleosides, yielding D-ribose 1-phosphate and the respective free bases. Can use uridine, adenosine, guanosine, cytidine, thymidine, inosine and xanthosine as substrates. Also catalyzes the reverse reactions. The polypeptide is Pyrimidine/purine nucleoside phosphorylase (Pseudomonas paraeruginosa (strain DSM 24068 / PA7) (Pseudomonas aeruginosa (strain PA7))).